Reading from the N-terminus, the 120-residue chain is MSYRKLGRTTSQRKALLRDLATDLIINERIETTEARAKELRSVMEKMITLGKRGDLHARRQAAAFIRKEVANSETGQDALQKLFSDIAPRYQDRQGGYTRIMKLGPRRGDGAPMVIIELV.

It belongs to the bacterial ribosomal protein bL17 family. Part of the 50S ribosomal subunit. Contacts protein L32.

This is Large ribosomal subunit protein bL17 from Geobacillus kaustophilus (strain HTA426).